We begin with the raw amino-acid sequence, 64 residues long: Chromatin protein Cren7 (64 aa).

It belongs to the Cren7 family. Monomer. Post-translationally, methylated at multiple sites, to varying extents.

It is found in the chromosome. It localises to the cytoplasm. In terms of biological role, a chromatin protein, binds double-stranded DNA without sequence specificity. Constrains negative DNA supercoils. This is Chromatin protein Cren7 from Aeropyrum pernix (strain ATCC 700893 / DSM 11879 / JCM 9820 / NBRC 100138 / K1).